A 109-amino-acid chain; its full sequence is uncharacterized protein (109 aa).

This is an uncharacterized protein from Methanocaldococcus jannaschii (strain ATCC 43067 / DSM 2661 / JAL-1 / JCM 10045 / NBRC 100440) (Methanococcus jannaschii).